A 29-amino-acid chain; its full sequence is Brevinin-2Ee (29 aa).

Cys-23 and Cys-29 are oxidised to a cystine.

The protein belongs to the frog skin active peptide (FSAP) family. Brevinin subfamily. Expressed by the skin glands.

Its subcellular location is the secreted. Functionally, shows antibacterial activity against representative Gram-negative and Gram-positive bacterial species, and hemolytic activity. In Pelophylax lessonae (Pool frog), this protein is Brevinin-2Ee.